The sequence spans 445 residues: UDP-N-acetylmuramoylalanine--D-glutamate ligase (445 aa).

118–124 lines the ATP pocket; it reads GTNGKTT.

The protein belongs to the MurCDEF family.

The protein resides in the cytoplasm. It catalyses the reaction UDP-N-acetyl-alpha-D-muramoyl-L-alanine + D-glutamate + ATP = UDP-N-acetyl-alpha-D-muramoyl-L-alanyl-D-glutamate + ADP + phosphate + H(+). It functions in the pathway cell wall biogenesis; peptidoglycan biosynthesis. Functionally, cell wall formation. Catalyzes the addition of glutamate to the nucleotide precursor UDP-N-acetylmuramoyl-L-alanine (UMA). The sequence is that of UDP-N-acetylmuramoylalanine--D-glutamate ligase from Macrococcus caseolyticus (strain JCSC5402) (Macrococcoides caseolyticum).